Here is a 207-residue protein sequence, read N- to C-terminus: Large ribosomal subunit protein uL4 (207 aa).

Positions 45–80 (RQGTHAVKNRSEVRGGGRKPWRQKGTGRARQGSTRS) are disordered. The span at 60–71 (GGRKPWRQKGTG) shows a compositional bias: basic residues.

This sequence belongs to the universal ribosomal protein uL4 family. As to quaternary structure, part of the 50S ribosomal subunit.

One of the primary rRNA binding proteins, this protein initially binds near the 5'-end of the 23S rRNA. It is important during the early stages of 50S assembly. It makes multiple contacts with different domains of the 23S rRNA in the assembled 50S subunit and ribosome. Functionally, forms part of the polypeptide exit tunnel. In Oceanobacillus iheyensis (strain DSM 14371 / CIP 107618 / JCM 11309 / KCTC 3954 / HTE831), this protein is Large ribosomal subunit protein uL4.